A 268-amino-acid chain; its full sequence is MAQNRVSRLMQEDRKFLIAYYMPEFPLPGSTLPVLEALQKSGVDIIELGMPYSDPIGDGPVIQDAAHTAIGNGVHIAGILDLVRKARAGEGCEKITVPLLLMGYCSPLIAYGGDCFLSDASEAGVDGLLIPDLPPEEAEDFLFRARGFGLSVIFFISPETPPERIGMIDGLSTDFSYCFAVNATTGTAKLAGADSERDIESYLRRVREHTKKKFVVGFGIKDRARVEKMWNLADGAVVGTALLQAIRNASTPEEVALMTAEFWKTLKS.

Catalysis depends on proton acceptor residues E47 and D58.

The protein belongs to the TrpA family. Tetramer of two alpha and two beta chains.

The enzyme catalyses (1S,2R)-1-C-(indol-3-yl)glycerol 3-phosphate + L-serine = D-glyceraldehyde 3-phosphate + L-tryptophan + H2O. The protein operates within amino-acid biosynthesis; L-tryptophan biosynthesis; L-tryptophan from chorismate: step 5/5. In terms of biological role, the alpha subunit is responsible for the aldol cleavage of indoleglycerol phosphate to indole and glyceraldehyde 3-phosphate. The chain is Tryptophan synthase alpha chain from Chlorobium phaeobacteroides (strain BS1).